The primary structure comprises 233 residues: Protein Atu3128 (233 aa).

It belongs to the glycosyl hydrolase 88 family.

Seems to regulate the surface properties of the bacterium in the presence of plant cells or plant cell extracts. Mutations in this protein are responsible for an increased aggregation of the bacteria in the presence of pea root cap cells. The polypeptide is Protein Atu3128 (Agrobacterium fabrum (strain C58 / ATCC 33970) (Agrobacterium tumefaciens (strain C58))).